The following is a 492-amino-acid chain: N-succinylglutamate 5-semialdehyde dehydrogenase (492 aa).

220 to 225 (GSANTG) contributes to the NAD(+) binding site. Active-site residues include Glu-243 and Cys-277.

It belongs to the aldehyde dehydrogenase family. AstD subfamily.

It carries out the reaction N-succinyl-L-glutamate 5-semialdehyde + NAD(+) + H2O = N-succinyl-L-glutamate + NADH + 2 H(+). It participates in amino-acid degradation; L-arginine degradation via AST pathway; L-glutamate and succinate from L-arginine: step 4/5. Catalyzes the NAD-dependent reduction of succinylglutamate semialdehyde into succinylglutamate. The sequence is that of N-succinylglutamate 5-semialdehyde dehydrogenase from Escherichia coli O6:K15:H31 (strain 536 / UPEC).